We begin with the raw amino-acid sequence, 526 residues long: Triacylglycerol lipase OBL1 (526 aa).

The chain crosses the membrane as a helical span at residues 79-99; it reads GHLTDFLLNFYYQNHGFLGIL. Positions 338–342 match the GXSXG motif; it reads GHSLG. The Nucleophile role is filled by Ser-340. Residues Asp-404 and His-497 each act as charge relay system in the active site.

The protein belongs to the AB hydrolase superfamily. Lipase family.

The protein localises to the membrane. The catalysed reaction is a triacylglycerol + H2O = a diacylglycerol + a fatty acid + H(+). Its function is as follows. Acid lipase that can hydrolyze a range of triacylglycerols but is not active on phospholipids. In vitro, hydrolyzes triolein, trilinolein, triricinolein, tripalmitin, trilaurin and tricaprin. May play a role in the regulation of lipolysis in germinating seeds. This chain is Triacylglycerol lipase OBL1, found in Ricinus communis (Castor bean).